Reading from the N-terminus, the 322-residue chain is Pyrroline-5-carboxylate reductase (322 aa).

The next 2 helical transmembrane spans lie at 9–29 and 117–137; these read YPNV…VGLL and ILIS…LHFW. Residues 302–322 are disordered; it reads LSQSAGSHGEDNTTDSKTSRA. An N-linked (GlcNAc...) asparagine glycan is attached at asparagine 313.

Belongs to the pyrroline-5-carboxylate reductase family.

It localises to the membrane. It carries out the reaction L-proline + NADP(+) = (S)-1-pyrroline-5-carboxylate + NADPH + 2 H(+). The enzyme catalyses L-proline + NAD(+) = (S)-1-pyrroline-5-carboxylate + NADH + 2 H(+). It functions in the pathway alkaloid biosynthesis. Its function is as follows. Pyrroline-5-carboxylate reductase; part of the gene cluster that mediates the biosynthesis of paraherquamide, a fungal indole alkaloid that belongs to a family of natural products containing a characteristic bicyclo[2.2.2]diazaoctane core. The first steps in the biosynthesis of paraherquamide is the production of the beta-methyl-proline precursor from L-isoleucine. They require oxidation of a terminally hydroxylated L-isoleucine to the corresponding aldehyde by enzymes which have still to be identified. Spontaneous cyclization and dehydration would yield the 4-methyl pyrolline-5-carboxylic acid, which is then reduced by the pyrroline-5-carboxylate reductase phqD leading to the beta-methyl-proline precursor. The next step of paraherquamide biosynthesis involves coupling of beta-methyl-proline and L-tryptophan by the bimodular NRPS phqB, to produce a monooxopiperazine intermediate. The reductase (R) domain of phqB utilizes NADPH for hydride transfer to reduce the thioester bond of the T domain-tethered linear dipeptide to a hemithioaminal intermediate, which spontaneously cleaves the C-S bond to release the aldehyde product. This compound undergoes spontaneous cyclization and dehydration to give a dienamine which is reverse prenylated at C-2 by the reverse prenyltransferase phqJ. The other prenyltransferase present in the cluster, phqI may be a redundant gene in the pathway. During biosynthetic assembly, the key step to produce the polycyclic core is catalyzed by the bifunctional reductase and intramolecular [4+2] Diels-Alderase, phqE, resulting in formation of the [2.2.2] diazaoctane intermediate preparaherquamide. Following formation of preparaherquamide, an indole 2,3-epoxidation-initiated pinacol-like rearrangement is catalyzed by the phqK FAD-dependent monooxygenase. The prenyltransferase phqA, the cytochrome P450 monooxygenase phqL, and the FAD-linked oxidoreductase phqH (or the cytochrome P450 monooxygenase phqM), are proposed to be involved in the formation of the pyran ring. The FAD-dependent monooxygenase phqK is likely responsible for generation of the spiro-oxindole, and the N-methylation is likely mediated by the phqN methyltransferase leading to the isolable natural product paraherquamide F. However, the order of these biosynthetic steps has still to be determined. In late-stage paraherquamide biosynthesis, the third P450 monooxygenase, phqO, is probably responsible for the C-14 hydroxylation, transforming paraherquamide F to paraherquamide G, and paraherquamide E to the final product paraherquamide A. The expansion from the 6-membered ring pyran (in paraherquamides F and G) to the 7-membered dioxepin ring (in paraherquamides A and E) represents a poorly understood but intriguing process that probably involves the 2-oxoglutarate-dependent dioxygenase phqC. Finally, the remaining members of the paraherquamide cluster, including phqI as well as phqM (or phqH), do not have a clearly prescribed role and appear to be redundant. The chain is Pyrroline-5-carboxylate reductase from Penicillium fellutanum.